Reading from the N-terminus, the 221-residue chain is Chaperone protein TorD (221 aa).

Belongs to the TorD/DmsD family. TorD subfamily.

Its subcellular location is the cytoplasm. In terms of biological role, involved in the biogenesis of TorA. Acts on TorA before the insertion of the molybdenum cofactor and, as a result, probably favors a conformation of the apoenzyme that is competent for acquiring the cofactor. In Shewanella pealeana (strain ATCC 700345 / ANG-SQ1), this protein is Chaperone protein TorD.